The sequence spans 131 residues: Small ribosomal subunit protein bS6 (131 aa).

Residues 98–131 (EASPMVKAKDERRERRDDFANETADDADAGDSEE) are disordered. Basic and acidic residues predominate over residues 104 to 116 (KAKDERRERRDDF). Positions 120–131 (TADDADAGDSEE) are enriched in acidic residues.

It belongs to the bacterial ribosomal protein bS6 family.

Functionally, binds together with bS18 to 16S ribosomal RNA. The polypeptide is Small ribosomal subunit protein bS6 (Citrobacter koseri (strain ATCC BAA-895 / CDC 4225-83 / SGSC4696)).